A 419-amino-acid chain; its full sequence is MDKFRVQGPTTLQGEVTISGAKNAALPILFAALLAEEPVEIQNVPKLKDVDTSMKLLSQLGAKVERNGSVHIDASQVNVFCAPYDLVKTMRASIWALGPLVARFGQGQVSLPGGCTIGARPVDLHITGLEQLGATIKLEEGYVKASVDGRLKGAHIVMDKVSVGATVTIMCAATLAEGTTIIENAAREPEIVDTANFLVALGAKISGQGTDRITIEGVEHLGGGIYRVLPDRIETGTFLVAAAISRGKIICRNAQPDTLDAVLAKLRDAGADIEVGEDWISLDMHGKRPKAVNVRTAPHPAFPTDMQAQFTLLNLVAEGTGFITETVFENRFMHVPELSRMGARAEIESNTVICHGVETLSGAQVMATDLRASASLVLAGCIAEGTTVVDRIYHIDRGYERIEDKLRALGAHIERVKGE.

Position 22-23 (22-23 (KN)) interacts with phosphoenolpyruvate. Residue Arg91 coordinates UDP-N-acetyl-alpha-D-glucosamine. The active-site Proton donor is the Cys115. Cys115 is subject to 2-(S-cysteinyl)pyruvic acid O-phosphothioketal. Residues 120 to 124 (RPVDL), 160 to 163 (KVSV), Asp305, and Val327 each bind UDP-N-acetyl-alpha-D-glucosamine.

It belongs to the EPSP synthase family. MurA subfamily.

It localises to the cytoplasm. It carries out the reaction phosphoenolpyruvate + UDP-N-acetyl-alpha-D-glucosamine = UDP-N-acetyl-3-O-(1-carboxyvinyl)-alpha-D-glucosamine + phosphate. The protein operates within cell wall biogenesis; peptidoglycan biosynthesis. Cell wall formation. Adds enolpyruvyl to UDP-N-acetylglucosamine. This chain is UDP-N-acetylglucosamine 1-carboxyvinyltransferase, found in Salmonella arizonae (strain ATCC BAA-731 / CDC346-86 / RSK2980).